The primary structure comprises 132 residues: Small ribosomal subunit protein uS8 (132 aa).

The protein belongs to the universal ribosomal protein uS8 family. As to quaternary structure, part of the 30S ribosomal subunit. Contacts proteins S5 and S12.

One of the primary rRNA binding proteins, it binds directly to 16S rRNA central domain where it helps coordinate assembly of the platform of the 30S subunit. The sequence is that of Small ribosomal subunit protein uS8 from Syntrophomonas wolfei subsp. wolfei (strain DSM 2245B / Goettingen).